A 308-amino-acid chain; its full sequence is Transcriptional adapter 1-1 (308 aa).

Belongs to the TADA1 family. Component of the Spt-Ada-Gcn5 acetyltransferase (SAGA) complex consisting of wda/Taf5L, Saf6, Taf9, Taf10b, Taf12, Ada1, Spt3, Spt7, Spt20, Sf3b3, Sf3b5, Nipped-A/Tra1, a histone acetyltransferase (HAT) module made up of Gcn5, Ada2b (Isoform B), Ada3 and Sgf29, and a deubiquitinase (DUB) module made up of not/nonstop, Sgf11 and e(y)2 tethered to SAGA by Atxn7. Not a component of the Ada2a-containing ATAC complex.

It localises to the nucleus. In terms of biological role, component of the transcription regulatory complex SAGA, a multiprotein complex that activates transcription by remodeling chromatin and mediating histone acetylation and deubiquitination. The SAGA complex predominantly acetylates histone H3. The chain is Transcriptional adapter 1-1 from Drosophila melanogaster (Fruit fly).